Here is a 305-residue protein sequence, read N- to C-terminus: Large ribosomal subunit protein uL3c (305 aa).

The transit peptide at 1-84 (MAAILPTFSI…AVGGLEIKMM (84 aa)) directs the protein to the chloroplast. A disordered region spans residues 228–256 (SHRALGSIGAGTTPGHVYKGKKMPGRMGG).

Component of the chloroplast large ribosomal subunit (LSU). Mature 70S chloroplast ribosomes of higher plants consist of a small (30S) and a large (50S) subunit. The 30S small subunit contains 1 molecule of ribosomal RNA (16S rRNA) and 24 different proteins. The 50S large subunit contains 3 rRNA molecules (23S, 5S and 4.5S rRNA) and 33 different proteins.

The protein localises to the plastid. Its subcellular location is the chloroplast. Its function is as follows. Component of the chloroplast ribosome (chloro-ribosome), a dedicated translation machinery responsible for the synthesis of chloroplast genome-encoded proteins, including proteins of the transcription and translation machinery and components of the photosynthetic apparatus. The chain is Large ribosomal subunit protein uL3c (RPL3) from Spinacia oleracea (Spinach).